We begin with the raw amino-acid sequence, 160 residues long: Cyclic pyranopterin monophosphate synthase (160 aa).

Substrate-binding positions include 74-76 and 112-113; these read LSH and ME. The active site involves D127.

The protein belongs to the MoaC family. In terms of assembly, homohexamer; trimer of dimers.

The enzyme catalyses (8S)-3',8-cyclo-7,8-dihydroguanosine 5'-triphosphate = cyclic pyranopterin phosphate + diphosphate. It functions in the pathway cofactor biosynthesis; molybdopterin biosynthesis. Its function is as follows. Catalyzes the conversion of (8S)-3',8-cyclo-7,8-dihydroguanosine 5'-triphosphate to cyclic pyranopterin monophosphate (cPMP). This chain is Cyclic pyranopterin monophosphate synthase, found in Geobacter metallireducens (strain ATCC 53774 / DSM 7210 / GS-15).